The primary structure comprises 115 residues: Putative UPF0377 protein YHL045W (115 aa).

Residues 10 to 30 (ACIFIDSVCEGIVFWGLCLFV) form a helical membrane-spanning segment.

It belongs to the UPF0377 family.

The protein resides in the membrane. This Saccharomyces cerevisiae (strain ATCC 204508 / S288c) (Baker's yeast) protein is Putative UPF0377 protein YHL045W.